The following is a 107-amino-acid chain: QIVLTQSPAIMSASPGQKVTMTCSASSSVSYMHWYQQKSGTSPKRWIYDTSKLASGVPARFSGSGSATSYSLTITSMQAEDAATYYCQQWSSNPLTFGAGTKLELKR.

The segment at 1-23 is framework-1; sequence QIVLTQSPAIMSASPGQKVTMTC. An intrachain disulfide couples cysteine 23 to cysteine 87. A complementarity-determining-1 region spans residues 24–33; it reads SASSSVSYMH. Residues 34 to 48 form a framework-2 region; it reads WYQQKSGTSPKRWIY. The interval 49 to 55 is complementarity-determining-2; that stretch reads DTSKLAS. The tract at residues 56–87 is framework-3; it reads GVPARFSGSGSATSYSLTITSMQAEDAATYYC. Residues 88–96 form a complementarity-determining-3 region; it reads QQWSSNPLT. Residues 97-106 form a framework-4 region; the sequence is FGAGTKLELK.

Functionally, anti-2-phenyl oxazolone (PHOX) Antibody. In Mus musculus (Mouse), this protein is Ig kappa chain V-VI region NQ2-17.4.1.